Here is an 81-residue protein sequence, read N- to C-terminus: Putative defensin-like protein 56 (81 aa).

Positions 1–23 (MNITKAYVIFFLVVILTNSLSNS) are cleaved as a signal peptide. Intrachain disulfides connect cysteine 46–cysteine 80, cysteine 50–cysteine 73, cysteine 59–cysteine 78, and cysteine 63–cysteine 79.

Belongs to the DEFL family.

It is found in the secreted. The protein is Putative defensin-like protein 56 of Arabidopsis thaliana (Mouse-ear cress).